The sequence spans 311 residues: MAAADDLAFHEFEEAANLLAETPDAATTSQSDKLTSQEHVAVVVGSGIGYGAEGEEEDDKTSLLQDEKPQPRFWTFDYYQSFFDVDTSQVLDRIKGSLLPHPGHNFVRHHLRNRPDLYGPFWICATLAFVLAVTGNLTLVLAQRRDPSIHYSPQFHKVTIAGITIYCYAWLVPLALWGFLRWRQGTRERMGLYTFLETVCVYGYSLFVFIPTVVLWLIPVQWLQWLFGALALALSAAGLVFTLWPVVREDTRLVAAALLSIVVLLHALLALGCKLYFFQPLPLDHVVPAPQAIPPSPNVLLPSSVQPMTTF.

An N-acetylalanine modification is found at Ala2. The Cytoplasmic segment spans residues 2–120 (AAADDLAFHE…LRNRPDLYGP (119 aa)). The helical transmembrane segment at 121-141 (FWICATLAFVLAVTGNLTLVL) threads the bilayer. The Lumenal segment spans residues 142-159 (AQRRDPSIHYSPQFHKVT). A helical transmembrane segment spans residues 160–180 (IAGITIYCYAWLVPLALWGFL). Residues 181-198 (RWRQGTRERMGLYTFLET) lie on the Cytoplasmic side of the membrane. A helical transmembrane segment spans residues 199–219 (VCVYGYSLFVFIPTVVLWLIP). Over 220–226 (VQWLQWL) the chain is Lumenal. Residues 227–247 (FGALALALSAAGLVFTLWPVV) traverse the membrane as a helical segment. The Cytoplasmic segment spans residues 248-252 (REDTR). Residues 253 to 273 (LVAAALLSIVVLLHALLALGC) traverse the membrane as a helical segment. Residues 274-311 (KLYFFQPLPLDHVVPAPQAIPPSPNVLLPSSVQPMTTF) are Lumenal-facing.

The protein belongs to the YIP1 family. Interacts with YIPF6; this interaction may stabilize YIPF2. May also form a ternary complex with YIPF1 and YIPF6.

Its subcellular location is the golgi apparatus. It is found in the cis-Golgi network membrane. It localises to the trans-Golgi network membrane. The protein localises to the late endosome membrane. This chain is Protein YIPF2 (Yipf2), found in Rattus norvegicus (Rat).